Consider the following 170-residue polypeptide: APRG1 tumor suppressor candidate (170 aa).

A helical transmembrane segment spans residues 150 to 170 (IALALAGPGAILILELSWFLG).

As to expression, expressed at high levels in the pancreas and placenta. Expressed at high levels in the kidney.

Its subcellular location is the membrane. In Homo sapiens (Human), this protein is APRG1 tumor suppressor candidate.